The sequence spans 161 residues: MPLKMAVYPGSFDPVTYGHLDIIDRGLKIFDGVIVAVARNSEKNALFSVQERIELLTEILKDRPEARVETFDGLLVDYVRRVGASVIIRGLRAVSDFEFEFQLAQMNRNITRDVETLFMMTSVPYSYLSSSIVKEVSCLNGPVDKLVPPLVKSALDAKFRG.

Ser11 lines the substrate pocket. ATP-binding positions include 11-12 (SF) and His19. Residues Lys43, Leu75, and Arg89 each coordinate substrate. Residues 90–92 (GLR), Glu100, and 125–131 (YSYLSSS) contribute to the ATP site.

This sequence belongs to the bacterial CoaD family. As to quaternary structure, homohexamer. It depends on Mg(2+) as a cofactor.

It localises to the cytoplasm. The catalysed reaction is (R)-4'-phosphopantetheine + ATP + H(+) = 3'-dephospho-CoA + diphosphate. The protein operates within cofactor biosynthesis; coenzyme A biosynthesis; CoA from (R)-pantothenate: step 4/5. Functionally, reversibly transfers an adenylyl group from ATP to 4'-phosphopantetheine, yielding dephospho-CoA (dPCoA) and pyrophosphate. The protein is Phosphopantetheine adenylyltransferase of Geobacter sp. (strain M21).